The following is a 256-amino-acid chain: MQWQDHAIILGIKRHGETSVIAEVMTRDRGRHLGLVRSGRSRAMQPVLQPGNAVEVIWRARLDEHLGEFRVEPVTLRAARLMETATAVYGVQAMGALLRLLPERDPHPHLFDALEVILDHLHNPADAGELFVRFELAVLNDLGFGLDLGECAATGARSDLAYVSPKSGRAVSRSAGAPWADKMLLLPPFLGVEGNHAADFDSLAAAFRLTGFFLHRHVYEPRGMEAAAARDGFVQAALKALNPALRTLAGPNGVSA.

It belongs to the RecO family.

Involved in DNA repair and RecF pathway recombination. The polypeptide is DNA repair protein RecO (Rhizobium etli (strain CIAT 652)).